A 146-amino-acid polypeptide reads, in one-letter code: Basic phospholipase A2 73 (146 aa).

The signal sequence occupies residues 1–19 (MYPAHLLVLLAVCVSLLGA). Residues 20–27 (ASIPPLPL) constitute a propeptide that is removed on maturation. Intrachain disulfides connect C38/C98, C54/C145, C56/C72, C71/C126, C78/C119, C87/C112, and C105/C117. Ca(2+) contacts are provided by Y55, G57, and G59. The active site involves H75. D76 contacts Ca(2+). The active site involves D120.

The protein belongs to the phospholipase A2 family. Group I subfamily. D49 sub-subfamily. The cofactor is Ca(2+). Expressed by the venom gland.

The protein resides in the secreted. The enzyme catalyses a 1,2-diacyl-sn-glycero-3-phosphocholine + H2O = a 1-acyl-sn-glycero-3-phosphocholine + a fatty acid + H(+). In terms of biological role, snake venom phospholipase A2 (PLA2) that inhibits neuromuscular transmission by blocking acetylcholine release from the nerve termini. PLA2 catalyzes the calcium-dependent hydrolysis of the 2-acyl groups in 3-sn-phosphoglycerides. The sequence is that of Basic phospholipase A2 73 from Hydrophis hardwickii (Hardwick's spine-bellied seasnake).